Consider the following 241-residue polypeptide: Phycocyanobilin:ferredoxin oxidoreductase (241 aa).

Belongs to the HY2 family.

The catalysed reaction is (2R,3Z)-phycocyanobilin + 4 oxidized [2Fe-2S]-[ferredoxin] = biliverdin IXalpha + 4 reduced [2Fe-2S]-[ferredoxin] + 4 H(+). Catalyzes the four-electron reduction of biliverdin IX-alpha (2-electron reduction at both the A and D rings); the reaction proceeds via an isolatable 2-electron intermediate, 181,182-dihydrobiliverdin. The sequence is that of Phycocyanobilin:ferredoxin oxidoreductase from Prochlorococcus marinus (strain MIT 9312).